A 481-amino-acid polypeptide reads, in one-letter code: Glutamyl-tRNA(Gln) amidotransferase subunit A (481 aa).

Catalysis depends on charge relay system residues Lys79 and Ser154. The tract at residues 136–157 (SAFGATKNPRNPEHVPGGSSGG) is disordered. Ser178 functions as the Acyl-ester intermediate in the catalytic mechanism.

The protein belongs to the amidase family. GatA subfamily. Heterotrimer of A, B and C subunits.

It carries out the reaction L-glutamyl-tRNA(Gln) + L-glutamine + ATP + H2O = L-glutaminyl-tRNA(Gln) + L-glutamate + ADP + phosphate + H(+). Functionally, allows the formation of correctly charged Gln-tRNA(Gln) through the transamidation of misacylated Glu-tRNA(Gln) in organisms which lack glutaminyl-tRNA synthetase. The reaction takes place in the presence of glutamine and ATP through an activated gamma-phospho-Glu-tRNA(Gln). The polypeptide is Glutamyl-tRNA(Gln) amidotransferase subunit A (Lachnospira eligens (strain ATCC 27750 / DSM 3376 / VPI C15-48 / C15-B4) (Eubacterium eligens)).